The following is a 622-amino-acid chain: E3 ubiquitin-protein ligase hrd-1 (622 aa).

The N-terminal stretch at M1–A23 is a signal peptide. Residues F24–N41 lie on the Lumenal side of the membrane. The helical transmembrane segment at A42–L62 threads the bilayer. The Cytoplasmic portion of the chain corresponds to K63 to D99. A helical transmembrane segment spans residues F100–L120. Residues A121–R141 lie on the Lumenal side of the membrane. A helical membrane pass occupies residues M142–F162. At S163 to S170 the chain is on the cytoplasmic side. Residues S171–I191 form a helical membrane-spanning segment. At K192–Y215 the chain is on the lumenal side. A helical transmembrane segment spans residues A216–L236. Topologically, residues R237–E622 are cytoplasmic. The segment at C292–R333 adopts an RING-type; atypical zinc-finger fold. Residues M436–N445 show a composition bias toward pro residues. 2 disordered regions span residues M436–D463 and P514–E622. Over residues A526–E538 the composition is skewed to low complexity. Residues F562–P577 show a composition bias toward polar residues. Positions P579–T596 are enriched in low complexity.

The protein belongs to the HRD1 family. As to quaternary structure, homodimer.

The protein localises to the endoplasmic reticulum membrane. The enzyme catalyses S-ubiquitinyl-[E2 ubiquitin-conjugating enzyme]-L-cysteine + [acceptor protein]-L-lysine = [E2 ubiquitin-conjugating enzyme]-L-cysteine + N(6)-ubiquitinyl-[acceptor protein]-L-lysine.. Its pathway is protein modification; protein ubiquitination. Functionally, acts as an E3 ubiquitin-protein ligase which accepts ubiquitin specifically from endoplasmic reticulum-associated ubc-7 E2 ligase and transfers it to substrates, promoting their degradation. Component of the endoplasmic reticulum quality control (ERQC) system, which is also called the ER-associated degradation (ERAD) system, involved in ubiquitin-dependent degradation of misfolded endoplasmic reticulum proteins. Also promotes the degradation of normal but naturally short-lived proteins. Protects cells from ER stress-induced apoptosis. Thought to play a role together with hsp-3 in developmental growth and function of intestinal cells and to play a role together with hsp-4 in gonad formation. In Caenorhabditis briggsae, this protein is E3 ubiquitin-protein ligase hrd-1.